We begin with the raw amino-acid sequence, 257 residues long: Synaptosomal-associated protein 29 (257 aa).

Residues 1 to 42 (MSGYPKSYNPFDDDVEDEDTRPAPWKDARDLPDGPDPPIDRQ) are disordered. The segment covering 20-32 (TRPAPWKDARDLP) has biased composition (basic and acidic residues). Residues Ser77, Ser78, Ser114, Ser163, Ser181, Ser203, and Ser209 each carry the phosphoserine modification. Residues 195 to 257 (RAYHQKIDSN…KSTEKKVRQL (63 aa)) form the t-SNARE coiled-coil homology domain.

It belongs to the SNAP-25 family. In terms of assembly, forms a SNARE complex, composed of VAMP8, SNAP29 and STX17, involved in fusion of autophagosome with lysosome. Interacts with multiple syntaxins including STX6. Interacts with EIPR1. Interacts with STX17; this interaction is increased in the absence of TMEM39A. As to expression, widely expressed.

It is found in the cytoplasm. Its subcellular location is the golgi apparatus membrane. The protein resides in the cytoplasmic vesicle. It localises to the autophagosome membrane. The protein localises to the cell projection. It is found in the cilium membrane. In terms of biological role, SNAREs, soluble N-ethylmaleimide-sensitive factor-attachment protein receptors, are essential proteins for fusion of cellular membranes. SNAREs localized on opposing membranes assemble to form a trans-SNARE complex, an extended, parallel four alpha-helical bundle that drives membrane fusion. SNAP29 is a SNARE involved in autophagy through the direct control of autophagosome membrane fusion with the lysososome membrane. Also plays a role in ciliogenesis by regulating membrane fusions. The sequence is that of Synaptosomal-associated protein 29 from Rattus norvegicus (Rat).